The following is a 208-amino-acid chain: Small ribosomal subunit protein uS4 (208 aa).

Residues 98–161 (RRLDNVIYRL…RKIPVLAEAQ (64 aa)) form the S4 RNA-binding domain.

The protein belongs to the universal ribosomal protein uS4 family. Part of the 30S ribosomal subunit. Contacts protein S5. The interaction surface between S4 and S5 is involved in control of translational fidelity.

In terms of biological role, one of the primary rRNA binding proteins, it binds directly to 16S rRNA where it nucleates assembly of the body of the 30S subunit. With S5 and S12 plays an important role in translational accuracy. This is Small ribosomal subunit protein uS4 from Nitratidesulfovibrio vulgaris (strain ATCC 29579 / DSM 644 / CCUG 34227 / NCIMB 8303 / VKM B-1760 / Hildenborough) (Desulfovibrio vulgaris).